The chain runs to 335 residues: UDP-3-O-acylglucosamine N-acyltransferase (335 aa).

Histidine 225 serves as the catalytic Proton acceptor.

Belongs to the transferase hexapeptide repeat family. LpxD subfamily. In terms of assembly, homotrimer.

It carries out the reaction a UDP-3-O-[(3R)-3-hydroxyacyl]-alpha-D-glucosamine + a (3R)-hydroxyacyl-[ACP] = a UDP-2-N,3-O-bis[(3R)-3-hydroxyacyl]-alpha-D-glucosamine + holo-[ACP] + H(+). It participates in bacterial outer membrane biogenesis; LPS lipid A biosynthesis. Catalyzes the N-acylation of UDP-3-O-acylglucosamine using 3-hydroxyacyl-ACP as the acyl donor. Is involved in the biosynthesis of lipid A, a phosphorylated glycolipid that anchors the lipopolysaccharide to the outer membrane of the cell. This Delftia acidovorans (strain DSM 14801 / SPH-1) protein is UDP-3-O-acylglucosamine N-acyltransferase.